A 253-amino-acid polypeptide reads, in one-letter code: Claudin domain-containing protein 1 (253 aa).

A helical transmembrane segment spans residues 5 to 25; it reads FATAFVIACVLSLISTIYMAA. N-linked (GlcNAc...) asparagine glycans are attached at residues asparagine 42 and asparagine 72. The next 3 helical transmembrane spans lie at 141–161, 175–195, and 216–236; these read FLLP…GLCA, ILHL…VAGI, and FCLA…FIWA.

This sequence belongs to the PMP-22/EMP/MP20 family. Widely distributed in the adult CNS with highest expression in the corpus callosum, caudate nucleus, cerebral cortex, medulla, putamen, spinal cord, substantia nigra and subthalamic nucleus. Weak expression was detected in the adult heart.

Its subcellular location is the cell junction. It localises to the tight junction. The protein resides in the cell membrane. In terms of biological role, plays a role in negatively regulating the permeability of cells to small molecules. The protein is Claudin domain-containing protein 1 (CLDND1) of Homo sapiens (Human).